The following is a 256-amino-acid chain: uncharacterized protein (256 aa).

The HTH cro/C1-type domain maps to 10–64 (IRALRESRDWSLADLAAATGVSTMGLSYLERGARKPHKSTVQKVENGLGLPPGTY). Residues 21-40 (LADLAAATGVSTMGLSYLER) constitute a DNA-binding region (H-T-H motif).

This is an uncharacterized protein from Mycobacterium bovis (strain ATCC BAA-935 / AF2122/97).